Here is a 447-residue protein sequence, read N- to C-terminus: Adenylosuccinate synthetase (447 aa).

GTP is bound by residues G12–K18 and G40–T42. D13 serves as the catalytic Proton acceptor. Mg(2+) is bound by residues D13 and G40. Residues D13 to K16, N38 to H41, T128, R142, Q223, T238, and R302 contribute to the IMP site. H41 acts as the Proton donor in catalysis. T298 to R304 is a binding site for substrate. GTP-binding positions include R304, K330 to D332, and S412 to G414.

The protein belongs to the adenylosuccinate synthetase family. As to quaternary structure, homodimer. Mg(2+) is required as a cofactor.

Its subcellular location is the cytoplasm. It carries out the reaction IMP + L-aspartate + GTP = N(6)-(1,2-dicarboxyethyl)-AMP + GDP + phosphate + 2 H(+). Its pathway is purine metabolism; AMP biosynthesis via de novo pathway; AMP from IMP: step 1/2. Its function is as follows. Plays an important role in the de novo pathway of purine nucleotide biosynthesis. Catalyzes the first committed step in the biosynthesis of AMP from IMP. In Trichormus variabilis (strain ATCC 29413 / PCC 7937) (Anabaena variabilis), this protein is Adenylosuccinate synthetase.